The following is a 263-amino-acid chain: MFNTAVKILYRSLIELTNHRLSSYLIKGFCESKISKPVIPLFSKHFRLNWDDVDGTAADYGSLSELFIRQINLERRPVSKEAHAVVSPVDGVVQTVGIINPNQTFTVKGKDYSFAELTGCKSADHQYNGGYFVVLYLSPRHYHRFHSPISCRYQKLAELGNRSYPVNQLGLKYGKDVLSKNYRFVYELNSGSRNVLMIPVGAMNINSIVQTNTRTELEIGEELGYFSFGSTVILVFEKDAFQPSAHLAEGQEVQVGELIGYEE.

Active-site charge relay system; for autoendoproteolytic cleavage activity residues include aspartate 90, histidine 146, and serine 230. The active-site Schiff-base intermediate with substrate; via pyruvic acid; for decarboxylase activity is serine 230. Serine 230 is modified (pyruvic acid (Ser); by autocatalysis).

It belongs to the phosphatidylserine decarboxylase family. PSD-B subfamily. Prokaryotic type I sub-subfamily. As to quaternary structure, heterodimer of a large membrane-associated beta subunit and a small pyruvoyl-containing alpha subunit. Requires pyruvate as cofactor. Is synthesized initially as an inactive proenzyme. Formation of the active enzyme involves a self-maturation process in which the active site pyruvoyl group is generated from an internal serine residue via an autocatalytic post-translational modification. Two non-identical subunits are generated from the proenzyme in this reaction, and the pyruvate is formed at the N-terminus of the alpha chain, which is derived from the carboxyl end of the proenzyme. The autoendoproteolytic cleavage occurs by a canonical serine protease mechanism, in which the side chain hydroxyl group of the serine supplies its oxygen atom to form the C-terminus of the beta chain, while the remainder of the serine residue undergoes an oxidative deamination to produce ammonia and the pyruvoyl prosthetic group on the alpha chain. During this reaction, the Ser that is part of the protease active site of the proenzyme becomes the pyruvoyl prosthetic group, which constitutes an essential element of the active site of the mature decarboxylase.

It is found in the cell membrane. The enzyme catalyses a 1,2-diacyl-sn-glycero-3-phospho-L-serine + H(+) = a 1,2-diacyl-sn-glycero-3-phosphoethanolamine + CO2. It functions in the pathway phospholipid metabolism; phosphatidylethanolamine biosynthesis; phosphatidylethanolamine from CDP-diacylglycerol: step 2/2. In terms of biological role, catalyzes the formation of phosphatidylethanolamine (PtdEtn) from phosphatidylserine (PtdSer). The protein is Phosphatidylserine decarboxylase proenzyme of Bacillus subtilis (strain 168).